We begin with the raw amino-acid sequence, 839 residues long: Putative AC9 transposase (839 aa).

Residues 32–43 are compositionally biased toward polar residues; the sequence is SSSNANGTATDP. Positions 32–85 are disordered; that stretch reads SSSNANGTATDPSQDDMAIVHEPQPQPQPQPEPQPQPQPEPEEEAPQKRAKKCT. Residues 55–70 show a composition bias toward pro residues; it reads QPQPQPQPEPQPQPQP.

The polypeptide is Putative AC9 transposase (Zea mays (Maize)).